The following is a 215-amino-acid chain: Cytochrome c biogenesis ATP-binding export protein CcmA (215 aa).

An ABC transporter domain is found at Leu-7–Tyr-209. An ATP-binding site is contributed by Gly-39–Thr-46.

Belongs to the ABC transporter superfamily. CcmA exporter (TC 3.A.1.107) family. In terms of assembly, the complex is composed of two ATP-binding proteins (CcmA) and two transmembrane proteins (CcmB).

It is found in the cell inner membrane. The enzyme catalyses heme b(in) + ATP + H2O = heme b(out) + ADP + phosphate + H(+). Its function is as follows. Part of the ABC transporter complex CcmAB involved in the biogenesis of c-type cytochromes; once thought to export heme, this seems not to be the case, but its exact role is uncertain. Responsible for energy coupling to the transport system. This chain is Cytochrome c biogenesis ATP-binding export protein CcmA, found in Mannheimia succiniciproducens (strain KCTC 0769BP / MBEL55E).